The following is a 62-amino-acid chain: Large ribosomal subunit protein eL24 (62 aa).

Cys-6, Cys-9, Cys-32, and Cys-36 together coordinate Zn(2+). A C4-type zinc finger spans residues 6–36 (CSFCGELLEPGTGLLFAKRDGSTYYFCSSKC).

This sequence belongs to the eukaryotic ribosomal protein eL24 family. Part of the 50S ribosomal subunit. Forms a cluster with proteins L3 and L14. Requires Zn(2+) as cofactor.

Functionally, binds to the 23S rRNA. The sequence is that of Large ribosomal subunit protein eL24 from Methanococcoides burtonii (strain DSM 6242 / NBRC 107633 / OCM 468 / ACE-M).